The primary structure comprises 27 residues: GFGSLFKFLGKKLLKTVAKQAAKKQME.

E27 bears the Glutamic acid 1-amide mark.

Expressed by the venom gland.

The protein resides in the secreted. This is Cupiennin-3a from Cupiennius salei (American wandering spider).